The sequence spans 747 residues: Catalase-peroxidase (747 aa).

The signal sequence occupies residues 1-27 (MRKFSVSKVALLAATMAPALLPAAARA). Positions 116–238 (WHSAGTYRTA…LAAVQMGLIY (123 aa)) form a cross-link, tryptophyl-tyrosyl-methioninium (Trp-Tyr) (with M-264). Residue His-117 is the Proton acceptor of the active site. The tryptophyl-tyrosyl-methioninium (Tyr-Met) (with W-116) cross-link spans 238 to 264 (YVNPEGPNGNPDPLLAAKDIRETFGRM). Residue His-279 participates in heme b binding.

This sequence belongs to the peroxidase family. Peroxidase/catalase subfamily. As to quaternary structure, homodimer or homotetramer. Requires heme b as cofactor. Post-translationally, formation of the three residue Trp-Tyr-Met cross-link is important for the catalase, but not the peroxidase activity of the enzyme.

It catalyses the reaction H2O2 + AH2 = A + 2 H2O. The catalysed reaction is 2 H2O2 = O2 + 2 H2O. Bifunctional enzyme with both catalase and broad-spectrum peroxidase activity. The sequence is that of Catalase-peroxidase from Novosphingobium aromaticivorans (strain ATCC 700278 / DSM 12444 / CCUG 56034 / CIP 105152 / NBRC 16084 / F199).